Here is a 497-residue protein sequence, read N- to C-terminus: Serine/threonine-protein kinase cst-1 (497 aa).

Positions 1–27 are disordered; it reads MPPSTDSSRRNSEEGSSDGFKLDSSAL. One can recognise a Protein kinase domain in the interval 35-286; the sequence is FDIVGKLGEG…ALRLCEHTFI (252 aa). ATP is bound by residues 41 to 49 and K64; that span reads LGEGSYGSV. D154 (proton acceptor) is an active-site residue. The tract at residues 367-416 is disordered; sequence KSAYIPGSSKNGNSPRVQPPGHTASASDPSKNQPFAQDGTGPNFQLGTSE. Positions 390 to 416 are enriched in polar residues; that stretch reads ASASDPSKNQPFAQDGTGPNFQLGTSE. The SARAH domain occupies 446-493; sequence FEFLRNITLDELIRRKESLDSEMEEEIRELQRRYKTKRQPILDVIEIK. A coiled-coil region spans residues 450–486; the sequence is RNITLDELIRRKESLDSEMEEEIRELQRRYKTKRQPI.

Belongs to the protein kinase superfamily. STE Ser/Thr protein kinase family. STE20 subfamily. Interacts with rsf-1 (via SARAH domain); the interaction is required for the phosphorylation of cst-1. Requires Mg(2+) as cofactor. In terms of processing, proteolytically cleaved by caspase-3 during apoptosis which results in kinase activation. Phosphorylated. As to expression, widely expressed in epidermal cells.

The catalysed reaction is L-seryl-[protein] + ATP = O-phospho-L-seryl-[protein] + ADP + H(+). It catalyses the reaction L-threonyl-[protein] + ATP = O-phospho-L-threonyl-[protein] + ADP + H(+). Its function is as follows. Serine/threonine-protein kinase which extends lifespan and delays tissue aging, probably by activating daf-16. The polypeptide is Serine/threonine-protein kinase cst-1 (Caenorhabditis elegans).